The chain runs to 186 residues: Peptidyl-tRNA hydrolase (186 aa).

TRNA is bound at residue Tyr-14. Residue His-19 is the Proton acceptor of the active site. TRNA contacts are provided by Phe-64, Asn-66, and Asn-112.

This sequence belongs to the PTH family. Monomer.

The protein localises to the cytoplasm. It catalyses the reaction an N-acyl-L-alpha-aminoacyl-tRNA + H2O = an N-acyl-L-amino acid + a tRNA + H(+). Functionally, hydrolyzes ribosome-free peptidyl-tRNAs (with 1 or more amino acids incorporated), which drop off the ribosome during protein synthesis, or as a result of ribosome stalling. Its function is as follows. Catalyzes the release of premature peptidyl moieties from peptidyl-tRNA molecules trapped in stalled 50S ribosomal subunits, and thus maintains levels of free tRNAs and 50S ribosomes. The protein is Peptidyl-tRNA hydrolase of Anaplasma marginale (strain St. Maries).